An 806-amino-acid chain; its full sequence is NADH-quinone oxidoreductase subunit G (806 aa).

The region spanning 15–93 (EMVTLTIDGV…DMVVRTQLTS (79 aa)) is the 2Fe-2S ferredoxin-type domain. [2Fe-2S] cluster-binding residues include Cys49, Cys60, Cys63, and Cys77. The 4Fe-4S His(Cys)3-ligated-type domain maps to 95–134 (IADKAQHGVMELLLINHPLDCPMCDKGGECPLQNQAMSNG). [4Fe-4S] cluster contacts are provided by His111, Cys115, Cys118, Cys124, Cys164, Cys167, Cys170, Cys214, Cys240, Cys243, Cys247, and Cys275. A 4Fe-4S Mo/W bis-MGD-type domain is found at 233-289 (LVSSPSVCEHCASGCAQRTDHRRGKVLRRLAGDDPEVNEEWNCDKGRWAFTYATQPD).

This sequence belongs to the complex I 75 kDa subunit family. The cofactor is [2Fe-2S] cluster. Requires [4Fe-4S] cluster as cofactor.

It carries out the reaction a quinone + NADH + 5 H(+)(in) = a quinol + NAD(+) + 4 H(+)(out). In terms of biological role, NDH-1 shuttles electrons from NADH, via FMN and iron-sulfur (Fe-S) centers, to quinones in the respiratory chain. The immediate electron acceptor for the enzyme in this species is believed to be menaquinone. Couples the redox reaction to proton translocation (for every two electrons transferred, four hydrogen ions are translocated across the cytoplasmic membrane), and thus conserves the redox energy in a proton gradient. The sequence is that of NADH-quinone oxidoreductase subunit G (nuoG) from Mycobacterium bovis (strain ATCC BAA-935 / AF2122/97).